Reading from the N-terminus, the 489-residue chain is Ribulose bisphosphate carboxylase large chain 2 (489 aa).

2 residues coordinate substrate: N128 and T178. K180 (proton acceptor) is an active-site residue. K182 is a substrate binding site. Mg(2+) contacts are provided by K206, D208, and E209. The residue at position 206 (K206) is an N6-carboxylysine. H298 functions as the Proton acceptor in the catalytic mechanism. 3 residues coordinate substrate: R299, H331, and S383.

It belongs to the RuBisCO large chain family. Type I subfamily. As to quaternary structure, heterohexadecamer of 8 large chains and 8 small chains. Mg(2+) is required as a cofactor.

The catalysed reaction is 2 (2R)-3-phosphoglycerate + 2 H(+) = D-ribulose 1,5-bisphosphate + CO2 + H2O. It catalyses the reaction D-ribulose 1,5-bisphosphate + O2 = 2-phosphoglycolate + (2R)-3-phosphoglycerate + 2 H(+). RuBisCO catalyzes two reactions: the carboxylation of D-ribulose 1,5-bisphosphate, the primary event in carbon dioxide fixation, as well as the oxidative fragmentation of the pentose substrate. Both reactions occur simultaneously and in competition at the same active site. This Nitrobacter winogradskyi (strain ATCC 25391 / DSM 10237 / CIP 104748 / NCIMB 11846 / Nb-255) protein is Ribulose bisphosphate carboxylase large chain 2.